A 341-amino-acid polypeptide reads, in one-letter code: Anthranilate phosphoribosyltransferase (341 aa).

Residues Gly79, 82-83, Thr87, 89-92, 107-115, and Ala119 contribute to the 5-phospho-alpha-D-ribose 1-diphosphate site; these read GD, NIST, and KHGNRAASS. Anthranilate is bound at residue Gly79. Position 91 (Ser91) interacts with Mg(2+). Residue Asn110 coordinates anthranilate. Arg165 contributes to the anthranilate binding site. The Mg(2+) site is built by Asp224 and Glu225.

This sequence belongs to the anthranilate phosphoribosyltransferase family. In terms of assembly, homodimer. The cofactor is Mg(2+).

It carries out the reaction N-(5-phospho-beta-D-ribosyl)anthranilate + diphosphate = 5-phospho-alpha-D-ribose 1-diphosphate + anthranilate. It participates in amino-acid biosynthesis; L-tryptophan biosynthesis; L-tryptophan from chorismate: step 2/5. Catalyzes the transfer of the phosphoribosyl group of 5-phosphorylribose-1-pyrophosphate (PRPP) to anthranilate to yield N-(5'-phosphoribosyl)-anthranilate (PRA). The protein is Anthranilate phosphoribosyltransferase of Lacticaseibacillus casei (strain BL23) (Lactobacillus casei).